The sequence spans 330 residues: D-alanine--D-alanine ligase (330 aa).

Positions 120–326 (KLWYDALGIP…FKTFLQKAVL (207 aa)) constitute an ATP-grasp domain. 150–205 (AFKQWGGLFVKAACQGSSVGCYKVTSEAELSKAINDAFGYSQQVLVEKAVKPRELE) provides a ligand contact to ATP. Mg(2+)-binding residues include D280, E293, and N295.

The protein belongs to the D-alanine--D-alanine ligase family. Requires Mg(2+) as cofactor. Mn(2+) serves as cofactor.

The protein localises to the cytoplasm. The catalysed reaction is 2 D-alanine + ATP = D-alanyl-D-alanine + ADP + phosphate + H(+). It participates in cell wall biogenesis; peptidoglycan biosynthesis. In terms of biological role, cell wall formation. This chain is D-alanine--D-alanine ligase, found in Aliivibrio fischeri (strain ATCC 700601 / ES114) (Vibrio fischeri).